The chain runs to 461 residues: MQKLFRAIPAIDKLIKSPQGVDLIERFGHQAFVQEARALIENAREQIIKQQCLPAFMNEQSAIFSLIEQNLQKKRMVSSKTVFNLTGTVLHTNLGRGLWSENAITAATNAMRNNVALEFDIDEGKRSHRDIYISQLIQQLTGAEAACVVNNNAAAVLLMLATFAQGKEVIVSRGELVEIGGAFRIPDIMAQAGCKLVEVGTTNRTHLWDYRNAINENTAFLMKVHTSNYHVQGFTKSVSEEELVELAKEFDLPVISDLGSGSLTDMAVLGLPAEPMVQQKVAAGVDLVSFSCDKLLGGPQAGIIVGKKVLIDALQSHPLKRVLRCDKVILSALEATLRHYLFPEKLTDEVPTFQLLTQSIETLQNKAERLKAVLNKRLDSRYILQVEPSLAQIGSGSLPTETLASVAVTVFAEKQSDLLELEKRFKALPSPIIGRFAQQKFWLDVRSAAQFEQLLNMLEEA.

Lysine 294 carries the post-translational modification N6-(pyridoxal phosphate)lysine.

This sequence belongs to the SelA family. The cofactor is pyridoxal 5'-phosphate.

The protein resides in the cytoplasm. It catalyses the reaction L-seryl-tRNA(Sec) + selenophosphate + H(+) = L-selenocysteinyl-tRNA(Sec) + phosphate. It participates in aminoacyl-tRNA biosynthesis; selenocysteinyl-tRNA(Sec) biosynthesis; selenocysteinyl-tRNA(Sec) from L-seryl-tRNA(Sec) (bacterial route): step 1/1. In terms of biological role, converts seryl-tRNA(Sec) to selenocysteinyl-tRNA(Sec) required for selenoprotein biosynthesis. This Actinobacillus pleuropneumoniae serotype 7 (strain AP76) protein is L-seryl-tRNA(Sec) selenium transferase.